A 44-amino-acid chain; its full sequence is ATITVVNRCSYTVWPGALPGGGVRLDPGQRWALNMPAGTAGAAV.

The protein belongs to the thaumatin family.

In terms of biological role, has antifungal activity. Inhibits the growth of Trichoderma viridae and Candida albicans. This is Antifungal protein R from Hordeum vulgare (Barley).